The following is a 143-amino-acid chain: Large ribosomal subunit protein uL16 (143 aa).

Over residues 1-17 the composition is skewed to basic residues; sequence MLQPKKTKFRRSQKGRM. Positions 1–25 are disordered; that stretch reads MLQPKKTKFRRSQKGRMKGNAQRGN.

It belongs to the universal ribosomal protein uL16 family. As to quaternary structure, part of the 50S ribosomal subunit.

Binds 23S rRNA and is also seen to make contacts with the A and possibly P site tRNAs. In Azobacteroides pseudotrichonymphae genomovar. CFP2, this protein is Large ribosomal subunit protein uL16.